An 871-amino-acid chain; its full sequence is Zinc finger and BTB domain-containing protein 10 (871 aa).

Disordered stretches follow at residues 1 to 156 (MSFS…FNGR) and 177 to 228 (GASL…AGEG). Positions 14 to 26 (RGGGLVTASGGGS) are enriched in gly residues. Positions 27 to 37 (TNNNAGGEASA) are enriched in low complexity. Pro residues predominate over residues 39 to 56 (PPQPQPRQPPPPAPPALQ). Acidic residues predominate over residues 65–76 (EEVELEGLEPQD). The segment covering 77 to 103 (LEASAGPAAGAAEEAKELLLPQDAGGP) has biased composition (low complexity). Residue R126 is modified to Omega-N-methylarginine. Over residues 126-135 (RGGGGGGLGN) the composition is skewed to gly residues. Phosphoserine is present on S210. A Glycyl lysine isopeptide (Lys-Gly) (interchain with G-Cter in SUMO2) cross-link involves residue K245. The BTB domain maps to 364–433 (CDVSIVVSGK…LYSGNLVLTS (70 aa)). Glycyl lysine isopeptide (Lys-Gly) (interchain with G-Cter in SUMO2) cross-links involve residues K468, K483, and K497. S565 carries the phosphoserine modification. Residues K573, K672, K684, K696, and K706 each participate in a glycyl lysine isopeptide (Lys-Gly) (interchain with G-Cter in SUMO2) cross-link. 2 C2H2-type zinc fingers span residues 722–744 (LKCPHCSYVAKYRRTLKRHLLIH) and 750–772 (FSCDICGKLFTRREHVKRHSLVH). A disordered region spans residues 812–871 (SQPGGQEGVDQGQDTEFPRDEEYEENEVGEADEELVDDGEDQNDPSRWDESGEVCMSLDD). Acidic residues predominate over residues 830–854 (RDEEYEENEVGEADEELVDDGEDQN).

It localises to the nucleus. In terms of biological role, may be involved in transcriptional regulation. This Homo sapiens (Human) protein is Zinc finger and BTB domain-containing protein 10 (ZBTB10).